We begin with the raw amino-acid sequence, 267 residues long: Indole-3-glycerol phosphate synthase (267 aa).

The protein belongs to the TrpC family.

It catalyses the reaction 1-(2-carboxyphenylamino)-1-deoxy-D-ribulose 5-phosphate + H(+) = (1S,2R)-1-C-(indol-3-yl)glycerol 3-phosphate + CO2 + H2O. It participates in amino-acid biosynthesis; L-tryptophan biosynthesis; L-tryptophan from chorismate: step 4/5. The polypeptide is Indole-3-glycerol phosphate synthase (Polynucleobacter asymbioticus (strain DSM 18221 / CIP 109841 / QLW-P1DMWA-1) (Polynucleobacter necessarius subsp. asymbioticus)).